The sequence spans 513 residues: Zinc finger CCCH-type with G patch domain-containing protein (513 aa).

Residues 155–178 (PCSYYLEGECRFDEAKCRFSHGAL) form a C3H1-type zinc finger. Acidic residues-rich tracts occupy residues 252 to 261 (DQDEDDELSS) and 273 to 283 (SDEAESDMDDL). Residues 252–283 (DQDEDDELSSEESTSSMRDASSDEAESDMDDL) form a disordered region. A G-patch domain is found at 312 to 358 (TRGIGSKLMEKMGYIHGTGLGSDGRGIVTPVSAQILPQGRSLDACME). Over residues 477-495 (QVQMQSHKQELATLQAQER) the composition is skewed to polar residues. The interval 477 to 513 (QVQMQSHKQELATLQAQERSLSKEQQTRKSKNKMFEF) is disordered. Basic and acidic residues predominate over residues 496–513 (SLSKEQQTRKSKNKMFEF).

It is found in the nucleus. In terms of biological role, transcription repressor. The protein is Zinc finger CCCH-type with G patch domain-containing protein of Drosophila simulans (Fruit fly).